The chain runs to 177 residues: FMRFamide-related peptides (177 aa).

The first 21 residues, M1–S21, serve as a signal peptide directing secretion. The propeptide occupies T22–A32. Position 45 is a phenylalanine amide (F45). Positions R47–S93 are excised as a propeptide. A phenylalanine amide mark is found at F102 and F111. Positions R113–Q131 are excised as a propeptide. L143 carries the leucine amide modification. The propeptide occupies R145–A177. A disordered region spans residues R145–A177. The span at L149–Y158 shows a compositional bias: acidic residues. Over residues E159–V169 the composition is skewed to basic and acidic residues.

This sequence belongs to the FARP (FMRFamide related peptide) family. In terms of tissue distribution, only expressed in the CNS and predominantly in the thoracic ganglia. Strongest expression is seen in two pairs of large neurons in each thoracic ganglion. These neurons are ventrolateral neurosecretory cells 1 and 2, they project their axons through transverse nerves into the periphery where axons from the prothoracic ganglion innervate the prothoracic gland.

The protein resides in the secreted. In terms of biological role, regulates ecdysteroidogenesis by direct innervation of the prothoracic gland by reducing cAMP production via the receptor for myosuppressin. The neurons that innervate the prothoracic gland during the fifth instar are most active during days 0-4, after which they reduce and then peak again on day 6. Expression suppresses the biosynthesis of steroid hormones called ecdysteroids that elicit molting and metamorphosis. This chain is FMRFamide-related peptides, found in Bombyx mori (Silk moth).